The chain runs to 211 residues: Regulator of G-protein signaling 2 (211 aa).

Disordered regions lie at residues 14–33 (RPMD…REKM) and 49–68 (LQNS…KQQA). The interval 32–66 (KMKRTLLKDWKTRLSYFLQNSSTPGKPKTGKKSKQ) is necessary for membrane association. Positions 79–116 (LWSEAFDELLASKYGLAAFRAFLKSEFCEENIEFWLAC) are necessary to inhibit protein synthesis. The region spanning 83 to 199 (AFDELLASKY…LESEFYQDLC (117 aa)) is the RGS domain.

As to quaternary structure, interacts with GNAQ. Does not interact with GNAI1 and GNAI3. Interacts with EIF2B5. Interacts with PRKG1 (isoform alpha). In terms of processing, phosphorylated by protein kinase C. Phosphorylation by PRKG1 leads to activation of RGS2 activity. Expressed in acute myelogenous leukemia (AML) and in acute lymphoblastic leukemia (ALL).

It is found in the cell membrane. The protein resides in the cytoplasm. It localises to the nucleus. The protein localises to the nucleolus. Its subcellular location is the mitochondrion. In terms of biological role, regulates G protein-coupled receptor signaling cascades. Inhibits signal transduction by increasing the GTPase activity of G protein alpha subunits, thereby driving them into their inactive GDP-bound form. It is involved in the negative regulation of the angiotensin-activated signaling pathway. Plays a role in the regulation of blood pressure in response to signaling via G protein-coupled receptors and GNAQ. Plays a role in regulating the constriction and relaxation of vascular smooth muscle. Binds EIF2B5 and blocks its activity, thereby inhibiting the translation of mRNA into protein. The sequence is that of Regulator of G-protein signaling 2 (RGS2) from Homo sapiens (Human).